The chain runs to 423 residues: Pre-mRNA polyadenylation factor fip-1 (423 aa).

Residues 1-11 (MDIDEDEDFYA) show a composition bias toward acidic residues. Disordered stretches follow at residues 1 to 178 (MDID…PVRT), 278 to 307 (GPGG…GGPG), and 360 to 423 (PGGG…GRRW). Positions 19 to 61 (PPTTAATTTTPATTTTTAAPTTTTTTTSTTTASAPPTTTSSST) are enriched in low complexity. Residues 65–90 (DELEEGEEEDEGGGAMDEDDDSDIDI) are compositionally biased toward acidic residues. The span at 135–146 (GTNSNSNSSSNK) shows a compositional bias: low complexity. The span at 360-415 (PGGGPGGPGTGGMGPGGPGGQGGQGQQFGGGFGGNQGQGGYGGYDQMGGAGGGGRG) shows a compositional bias: gly residues.

This sequence belongs to the FIP1 family.

The protein resides in the nucleus. Its function is as follows. Pre-mRNA polyadenylation factor that directly interacts with poly(A) polymerase. This Neurospora crassa (strain ATCC 24698 / 74-OR23-1A / CBS 708.71 / DSM 1257 / FGSC 987) protein is Pre-mRNA polyadenylation factor fip-1 (fip-1).